Here is a 510-residue protein sequence, read N- to C-terminus: Bifunctional purine biosynthesis protein PurH (510 aa).

Positions 1–142 (MRALISVSDK…KNFKDVLIVT (142 aa)) constitute an MGS-like domain.

Belongs to the PurH family.

The catalysed reaction is (6R)-10-formyltetrahydrofolate + 5-amino-1-(5-phospho-beta-D-ribosyl)imidazole-4-carboxamide = 5-formamido-1-(5-phospho-D-ribosyl)imidazole-4-carboxamide + (6S)-5,6,7,8-tetrahydrofolate. It catalyses the reaction IMP + H2O = 5-formamido-1-(5-phospho-D-ribosyl)imidazole-4-carboxamide. The protein operates within purine metabolism; IMP biosynthesis via de novo pathway; 5-formamido-1-(5-phospho-D-ribosyl)imidazole-4-carboxamide from 5-amino-1-(5-phospho-D-ribosyl)imidazole-4-carboxamide (10-formyl THF route): step 1/1. It participates in purine metabolism; IMP biosynthesis via de novo pathway; IMP from 5-formamido-1-(5-phospho-D-ribosyl)imidazole-4-carboxamide: step 1/1. This chain is Bifunctional purine biosynthesis protein PurH, found in Campylobacter curvus (strain 525.92).